A 325-amino-acid polypeptide reads, in one-letter code: Tetraacyldisaccharide 4'-kinase (325 aa).

55–62 lines the ATP pocket; that stretch reads TAGGNGKT.

This sequence belongs to the LpxK family.

It catalyses the reaction a lipid A disaccharide + ATP = a lipid IVA + ADP + H(+). It participates in glycolipid biosynthesis; lipid IV(A) biosynthesis; lipid IV(A) from (3R)-3-hydroxytetradecanoyl-[acyl-carrier-protein] and UDP-N-acetyl-alpha-D-glucosamine: step 6/6. Transfers the gamma-phosphate of ATP to the 4'-position of a tetraacyldisaccharide 1-phosphate intermediate (termed DS-1-P) to form tetraacyldisaccharide 1,4'-bis-phosphate (lipid IVA). The chain is Tetraacyldisaccharide 4'-kinase from Salmonella choleraesuis (strain SC-B67).